The chain runs to 220 residues: MSNLKLDVQTADGKTNGTVELPAELFDTEASIALMHQVVNAQLAAARQGTHKTKTRGEVRGGGRKPFRQKGTGRARQGSIRAPHYTGGGTVHGPVPRDYSQRTPKRMIKAALYGALSDRARNERIHVIEELVPGQTPSTKQAKAFIERLTDRKNVLLVIGREDINARRSANNLPNVQILDAGQLNTYDVLYSDDVVFSVEALHTFVERATGAAEEAKEEK.

Residues 45 to 102 (AARQGTHKTKTRGEVRGGGRKPFRQKGTGRARQGSIRAPHYTGGGTVHGPVPRDYSQR) are disordered. Residues 62–73 (GGRKPFRQKGTG) show a composition bias toward basic residues.

Belongs to the universal ribosomal protein uL4 family. In terms of assembly, part of the 50S ribosomal subunit.

Its function is as follows. One of the primary rRNA binding proteins, this protein initially binds near the 5'-end of the 23S rRNA. It is important during the early stages of 50S assembly. It makes multiple contacts with different domains of the 23S rRNA in the assembled 50S subunit and ribosome. In terms of biological role, forms part of the polypeptide exit tunnel. In Corynebacterium aurimucosum (strain ATCC 700975 / DSM 44827 / CIP 107346 / CN-1) (Corynebacterium nigricans), this protein is Large ribosomal subunit protein uL4.